We begin with the raw amino-acid sequence, 108 residues long: MTKTTMHWLAHFQIILLCIWLMCPPSSQAIKCDTCGKECASACGTKHFRTCCFNYLRKRSDPDALRQSSNRRLIDFILLQGRALFTQELRERRHNGTLMDLGLNTYYP.

A signal peptide spans 1–29 (MTKTTMHWLAHFQIILLCIWLMCPPSSQA). Disulfide bonds link C32–C43, C35–C52, and C39–C51. The propeptide occupies 57–108 (RKRSDPDALRQSSNRRLIDFILLQGRALFTQELRERRHNGTLMDLGLNTYYP).

Its subcellular location is the secreted. Activates the G-protein coupled receptor TrissinR in vitro, leading to increased intracellular calcium ion levels. The protein is Trissin of Drosophila melanogaster (Fruit fly).